The sequence spans 516 residues: Effector protein hopAB1 (516 aa).

Disordered regions lie at residues 1–93 and 175–259; these read MSGI…AQPA and RALA…DEAL. The span at 16–30 shows a compositional bias: basic and acidic residues; that stretch reads WRADDEPVTERERDS. Positions 31-41 are enriched in polar residues; the sequence is SSGANLTNSPQ. Residues 81–90 show a composition bias toward pro residues; it reads PVEPRQPPEA. Low complexity-rich tracts occupy residues 183 to 196 and 212 to 224; these read PAPSRPVASSSRSS and QTSSSSQATSSTS.

The protein belongs to the HopAB family.

The protein localises to the secreted. Functionally, effector protein that plays different roles depending on the species and plant cultivars that interact with the pathogen. Acts as a virulence determinant by enhancing the development of disease symptoms and bacterial growth. Acts as an avirulence factor by eliciting hypersensitive response (HR) and plant resistance. The protein is Effector protein hopAB1 (hopAB1) of Pseudomonas syringae pv. syringae (strain B728a).